Here is a 356-residue protein sequence, read N- to C-terminus: 1-deoxy-D-xylulose 5-phosphate reductoisomerase (356 aa).

The NADPH site is built by threonine 7, glycine 8, serine 9, isoleucine 10, glycine 31, asparagine 33, and asparagine 111. Position 112 (lysine 112) interacts with 1-deoxy-D-xylulose 5-phosphate. Glutamate 113 provides a ligand contact to NADPH. Residue aspartate 131 participates in Mn(2+) binding. 1-deoxy-D-xylulose 5-phosphate is bound by residues serine 132, glutamate 133, serine 155, and histidine 178. Residue glutamate 133 coordinates Mn(2+). Glycine 184 is a binding site for NADPH. Positions 191, 196, 197, and 200 each coordinate 1-deoxy-D-xylulose 5-phosphate. A Mn(2+)-binding site is contributed by glutamate 200.

The protein belongs to the DXR family. It depends on Mg(2+) as a cofactor. Mn(2+) is required as a cofactor.

The enzyme catalyses 2-C-methyl-D-erythritol 4-phosphate + NADP(+) = 1-deoxy-D-xylulose 5-phosphate + NADPH + H(+). It functions in the pathway isoprenoid biosynthesis; isopentenyl diphosphate biosynthesis via DXP pathway; isopentenyl diphosphate from 1-deoxy-D-xylulose 5-phosphate: step 1/6. In terms of biological role, catalyzes the NADPH-dependent rearrangement and reduction of 1-deoxy-D-xylulose-5-phosphate (DXP) to 2-C-methyl-D-erythritol 4-phosphate (MEP). This Campylobacter jejuni subsp. doylei (strain ATCC BAA-1458 / RM4099 / 269.97) protein is 1-deoxy-D-xylulose 5-phosphate reductoisomerase.